The chain runs to 412 residues: Phosphoglycerate kinase (412 aa).

Substrate contacts are provided by residues 24-26 (DLN), arginine 40, 63-66 (HLGR), arginine 122, and arginine 162. Residues lysine 212, glycine 300, glutamate 331, and 360 to 363 (GGDS) each bind ATP.

The protein belongs to the phosphoglycerate kinase family. In terms of assembly, monomer.

The protein resides in the cytoplasm. The enzyme catalyses (2R)-3-phosphoglycerate + ATP = (2R)-3-phospho-glyceroyl phosphate + ADP. It functions in the pathway carbohydrate degradation; glycolysis; pyruvate from D-glyceraldehyde 3-phosphate: step 2/5. The polypeptide is Phosphoglycerate kinase (pgk) (Mycobacterium bovis (strain ATCC BAA-935 / AF2122/97)).